Consider the following 190-residue polypeptide: Riboflavin transporter FmnP (190 aa).

The Extracellular segment spans residues 1–5 (MKVKK). A helical membrane pass occupies residues 6–26 (LVVVSMLSSIAFVLMLLNFPF). Over 27-39 (PGLPDYLKIDFSD) the chain is Cytoplasmic. The chain crosses the membrane as a helical span at residues 40-60 (VPAIIAILIYGPLAGIAVEAI). Over 61 to 76 (KNVLQYIIQGSMAGVP) the chain is Extracellular. Residues 77–97 (VGQVANFIAGTLFILPTAFLF) form a helical membrane-spanning segment. Over 98 to 109 (KKLNSAKGLAVS) the chain is Cytoplasmic. The helical transmembrane segment at 110 to 130 (LLLGTAAMTILMSILNYVLIL) threads the bilayer. The Extracellular portion of the chain corresponds to 131–154 (PAYTWFLHSPALSDSALKTAVVAG). The helical transmembrane segment at 155-175 (ILPFNMIKGIVITVVFSLIFI) threads the bilayer. Over 176–190 (KLKPWIEQQRSAHIH) the chain is Cytoplasmic.

It belongs to the prokaryotic riboflavin transporter (P-RFT) (TC 2.A.87) family. In terms of assembly, forms a stable energy-coupling factor (ECF) transporter complex composed of a membrane-embedded substrate-binding protein (S component), 2 ATP-binding proteins (A component) and 2 transmembrane proteins (T component). May be able to interact with more than 1 S component at a time.

The protein resides in the cell membrane. Inhibited by excess of riboflavin or FMN. Also inhibited by protonophores such as CCCP and FCCP or in the absence of glucose. Functionally, mediates uptake of riboflavin and roseoflavin, a toxic riboflavin analog; may also transport FMN. Probably a riboflavin-binding protein that interacts with the energy-coupling factor (ECF) ABC-transporter complex. Unlike classic ABC transporters this ECF transporter provides the energy necessary to transport a number of different substrates. The substrates themselves are bound by transmembrane, not extracytoplasmic soluble proteins. This is Riboflavin transporter FmnP (fmnP) from Bacillus subtilis (strain 168).